The sequence spans 87 residues: Tachykinin-1 (87 aa).

The N-terminal stretch at 1-22 (MIRVGLILCCIFIAGVFEASSA) is a signal peptide. The propeptide occupies 23–37 (DDMLTAHNLIKRSEV). M49 bears the Methionine amide mark. A propeptide spanning residues 52-87 (SEELTRRLIQHPGSMSETSKRGPPKKVSRRPYILKK) is cleaved from the precursor. The segment at 61–87 (QHPGSMSETSKRGPPKKVSRRPYILKK) is disordered. Positions 73–87 (GPPKKVSRRPYILKK) are enriched in basic residues.

This sequence belongs to the tachykinin family. In terms of tissue distribution, expressed in the posterior salivary gland and more specifically in the mucus-secreting gland cells.

The protein localises to the secreted. In terms of biological role, tachykinins are active peptides which excite neurons, evoke behavioral responses, are potent vasodilators and secretagogues, and contract (directly or indirectly) many smooth muscles. In Octopus vulgaris (Common octopus), this protein is Tachykinin-1.